The following is a 235-amino-acid chain: Secreted RxLR effector protein 27 (235 aa).

Residues 1-25 (MTNLFTRHTRRSLTALALLSGGVYA) form the signal peptide. A RxLR-dEER motif is present at residues 36–60 (RSLRVFVTGGQVLWDYRIHFKGIER).

Belongs to the RxLR effector family.

Its subcellular location is the secreted. It localises to the host cytoplasm. It is found in the host nucleus. Effector that acts as a broad suppressor of cell death to interrupt plant immunity. Inhibits cell death induced by cell death-inducing proteins, including the PAMP elicitor INF1 from P.infestans. The sequence is that of Secreted RxLR effector protein 27 from Plasmopara viticola (Downy mildew of grapevine).